A 247-amino-acid polypeptide reads, in one-letter code: Adenosylcobinamide-GDP ribazoletransferase (247 aa).

5 consecutive transmembrane segments (helical) span residues 34 to 54 (IITFPLIGLLLGAISGLVFMV), 59 to 79 (CGVPLAALFSVLVLALMTGGF), 113 to 133 (GGLALIFVVLAKILVLSELAL), 138 to 158 (ILASLAAACAVSRGTAALLMY), and 194 to 214 (VLLPGMHGVAAMVVTMVAIFI).

This sequence belongs to the CobS family. Mg(2+) is required as a cofactor.

Its subcellular location is the cell inner membrane. It carries out the reaction alpha-ribazole + adenosylcob(III)inamide-GDP = adenosylcob(III)alamin + GMP + H(+). It catalyses the reaction alpha-ribazole 5'-phosphate + adenosylcob(III)inamide-GDP = adenosylcob(III)alamin 5'-phosphate + GMP + H(+). The protein operates within cofactor biosynthesis; adenosylcobalamin biosynthesis; adenosylcobalamin from cob(II)yrinate a,c-diamide: step 7/7. In terms of biological role, joins adenosylcobinamide-GDP and alpha-ribazole to generate adenosylcobalamin (Ado-cobalamin). Also synthesizes adenosylcobalamin 5'-phosphate from adenosylcobinamide-GDP and alpha-ribazole 5'-phosphate. This is Adenosylcobinamide-GDP ribazoletransferase from Escherichia coli O7:K1 (strain IAI39 / ExPEC).